A 215-amino-acid polypeptide reads, in one-letter code: MKAFTQHTGLVAPLDRANVDTDQIIPKQFLKSIKRTGFGPNLFDEWRYLDVGQPGQDCSARPLNTGFVLNLPRYQGASVLLARENFGCGSSREHAPWALDEYGFRTVIAPSFADIFFNNSFKNGLLPIILPEAEVDELFRQCESTEGYRLTVDLAAQTVTRPDGKALSFEIDPFRKHCLLNGLDDIGLTLRDADAIRVFEEKHRQASPWLFGAIK.

The protein belongs to the LeuD family. LeuD type 1 subfamily. In terms of assembly, heterodimer of LeuC and LeuD.

The catalysed reaction is (2R,3S)-3-isopropylmalate = (2S)-2-isopropylmalate. It functions in the pathway amino-acid biosynthesis; L-leucine biosynthesis; L-leucine from 3-methyl-2-oxobutanoate: step 2/4. Catalyzes the isomerization between 2-isopropylmalate and 3-isopropylmalate, via the formation of 2-isopropylmaleate. This Azotobacter vinelandii protein is 3-isopropylmalate dehydratase small subunit (leuD).